We begin with the raw amino-acid sequence, 72 residues long: Translation initiation factor IF-1 (72 aa).

Residues 1–72 (MIKEDNIEMH…SKGRIIFRSR (72 aa)) enclose the S1-like domain.

This sequence belongs to the IF-1 family. Component of the 30S ribosomal translation pre-initiation complex which assembles on the 30S ribosome in the order IF-2 and IF-3, IF-1 and N-formylmethionyl-tRNA(fMet); mRNA recruitment can occur at any time during PIC assembly.

Its subcellular location is the cytoplasm. Its function is as follows. One of the essential components for the initiation of protein synthesis. Stabilizes the binding of IF-2 and IF-3 on the 30S subunit to which N-formylmethionyl-tRNA(fMet) subsequently binds. Helps modulate mRNA selection, yielding the 30S pre-initiation complex (PIC). Upon addition of the 50S ribosomal subunit IF-1, IF-2 and IF-3 are released leaving the mature 70S translation initiation complex. The sequence is that of Translation initiation factor IF-1 from Blochmanniella floridana.